The primary structure comprises 282 residues: MTDRYAVFGNPISHSKSPFIHGQFAAPTQESLTYEAILAPVDGFEASLTAFFNAGGKGANVTVPFKEQAFALCDSISPEAKLAGAVNTLSLLADGTIRGDNTDGLGLVADLIANLGSLQDQRVLLIGAGGAARGCILPLLNAEIAQLTISNRTHTKAQLLVDIFTSVDNGAYASKVTAVEMSELAGEFDIIINSTSASLAGELPPLPAHIITTQTVCYDMMYGASITAFNQWALSQGAAKVIDGLGMLVGQAAKSFTLWRGIEPDTQVVLTLLRDKLMAEPK.

Residues 15-17 and T62 each bind shikimate; that span reads SKS. K66 functions as the Proton acceptor in the catalytic mechanism. Shikimate contacts are provided by N87 and D103. NADP(+)-binding positions include 127-131, 151-156, and M220; these read GAGGA and NRTHTK. Position 222 (Y222) interacts with shikimate. G244 lines the NADP(+) pocket.

This sequence belongs to the shikimate dehydrogenase family. In terms of assembly, homodimer.

It carries out the reaction shikimate + NADP(+) = 3-dehydroshikimate + NADPH + H(+). Its pathway is metabolic intermediate biosynthesis; chorismate biosynthesis; chorismate from D-erythrose 4-phosphate and phosphoenolpyruvate: step 4/7. Its function is as follows. Involved in the biosynthesis of the chorismate, which leads to the biosynthesis of aromatic amino acids. Catalyzes the reversible NADPH linked reduction of 3-dehydroshikimate (DHSA) to yield shikimate (SA). The polypeptide is Shikimate dehydrogenase (NADP(+)) (Shewanella baltica (strain OS223)).